Reading from the N-terminus, the 328-residue chain is Sulfate adenylyltransferase subunit 2 (328 aa).

Disordered stretches follow at residues 15 to 34 (AAPDLADLGGEPARARPSSH) and 304 to 328 (SEREGRVIDRDSTASMERKKAEGYF).

Belongs to the PAPS reductase family. CysD subfamily. As to quaternary structure, heterodimer composed of CysD, the smaller subunit, and CysN.

It catalyses the reaction sulfate + ATP + H(+) = adenosine 5'-phosphosulfate + diphosphate. The protein operates within sulfur metabolism; hydrogen sulfide biosynthesis; sulfite from sulfate: step 1/3. Functionally, with CysN forms the ATP sulfurylase (ATPS) that catalyzes the adenylation of sulfate producing adenosine 5'-phosphosulfate (APS) and diphosphate, the first enzymatic step in sulfur assimilation pathway. APS synthesis involves the formation of a high-energy phosphoric-sulfuric acid anhydride bond driven by GTP hydrolysis by CysN coupled to ATP hydrolysis by CysD. This chain is Sulfate adenylyltransferase subunit 2, found in Rhodopseudomonas palustris (strain BisA53).